The chain runs to 255 residues: uncharacterized protein (255 aa).

Positions Met-1–Gly-23 are cleaved as a signal peptide. A lipid anchor (N-palmitoyl cysteine) is attached at Cys-24. Cys-24 carries the S-diacylglycerol cysteine lipid modification.

Belongs to the staphylococcal tandem lipoprotein family.

The protein resides in the cell membrane. This is an uncharacterized protein from Staphylococcus aureus (strain NCTC 8325 / PS 47).